A 193-amino-acid chain; its full sequence is Allatostatin A (193 aa).

The signal sequence occupies residues 1-25; sequence MKTSSLIAMRLIIFYLLSVVGRSTA. A propeptide spanning residues 26–64 is cleaved from the precursor; that stretch reads AVEEAPASSLHIPRLNPLSSNLEYDEPSEKRAYAYISEY. Ile-74 bears the Isoleucine amide mark. A propeptide spanning residues 78–84 is cleaved from the precursor; that stretch reads WIDNSED. An isoleucine amide mark is found at Ile-94 and Ile-105. Residues 109 to 139 constitute a propeptide that is removed on maturation; that stretch reads NSGYRPLGMDFSVDNMDFHSREDNLDDFIDD. Ile-150 carries the isoleucine amide modification. Ser-165 is subject to Serine amide. A propeptide spanning residues 169-193 is cleaved from the precursor; sequence LNDVVGPKYLLGLGKGLSENENLIQ.

The protein belongs to the allatostatin family. As to expression, allatostatins A1, A2 and A3 are expressed in brain, antennal lobes, optical lobes, gnathal ganglia, the retrocerebral complex and thoracic, abdominal and ventral ganglia. Allatostain A4 is expressed in brain (at protein level).

The protein resides in the secreted. Its function is as follows. May act as a neurotransmitter or neuromodulator. This is Allatostatin A from Camponotus floridanus (Florida carpenter ant).